A 223-amino-acid chain; its full sequence is Deoxyribose-phosphate aldolase (223 aa).

Asp-92 acts as the Proton donor/acceptor in catalysis. Lys-153 functions as the Schiff-base intermediate with acetaldehyde in the catalytic mechanism. Lys-182 serves as the catalytic Proton donor/acceptor.

Belongs to the DeoC/FbaB aldolase family. DeoC type 1 subfamily.

It localises to the cytoplasm. It carries out the reaction 2-deoxy-D-ribose 5-phosphate = D-glyceraldehyde 3-phosphate + acetaldehyde. The protein operates within carbohydrate degradation; 2-deoxy-D-ribose 1-phosphate degradation; D-glyceraldehyde 3-phosphate and acetaldehyde from 2-deoxy-alpha-D-ribose 1-phosphate: step 2/2. In terms of biological role, catalyzes a reversible aldol reaction between acetaldehyde and D-glyceraldehyde 3-phosphate to generate 2-deoxy-D-ribose 5-phosphate. The chain is Deoxyribose-phosphate aldolase from Mycoplasmoides gallisepticum (strain R(low / passage 15 / clone 2)) (Mycoplasma gallisepticum).